The chain runs to 287 residues: Probable WRKY transcription factor 57 (287 aa).

Residues 86–99 (TSTNNNPSATSSSS) show a composition bias toward low complexity. A disordered region spans residues 86–137 (TSTNNNPSATSSSSEDPAENSTASAEKTPPPETPVKEKKKAQKRIRQPRFAF). The span at 122–132 (EKKKAQKRIRQ) shows a compositional bias: basic residues. Positions 141–206 (SDVDNLEDGY…YEGQHCHQTI (66 aa)) form a DNA-binding region, WRKY. The tract at residues 248 to 287 (DNNAPSPRLPRPTTEDTPAVSTPSEEGLLGDIVPQTMRNP) is disordered. Residues 262-271 (EDTPAVSTPS) show a composition bias toward polar residues.

It belongs to the WRKY group II-c family.

The protein localises to the nucleus. Transcription factor. Interacts specifically with the W box (5'-(T)TGAC[CT]-3'), a frequently occurring elicitor-responsive cis-acting element. The chain is Probable WRKY transcription factor 57 (WRKY57) from Arabidopsis thaliana (Mouse-ear cress).